The chain runs to 348 residues: Protein RecA (348 aa).

Residue 66 to 73 (GPESSGKT) coordinates ATP.

Belongs to the RecA family.

It is found in the cytoplasm. Functionally, can catalyze the hydrolysis of ATP in the presence of single-stranded DNA, the ATP-dependent uptake of single-stranded DNA by duplex DNA, and the ATP-dependent hybridization of homologous single-stranded DNAs. It interacts with LexA causing its activation and leading to its autocatalytic cleavage. This chain is Protein RecA, found in Neisseria meningitidis serogroup A / serotype 4A (strain DSM 15465 / Z2491).